Consider the following 297-residue polypeptide: N-acetylneuraminate lyase (297 aa).

Aceneuramate-binding residues include Ser-47 and Thr-48. Tyr-137 functions as the Proton donor in the catalytic mechanism. Residue Lys-165 is the Schiff-base intermediate with substrate of the active site. Positions 167, 189, 191, 192, and 208 each coordinate aceneuramate.

The protein belongs to the DapA family. NanA subfamily. Homotetramer.

The protein resides in the cytoplasm. It catalyses the reaction aceneuramate = aldehydo-N-acetyl-D-mannosamine + pyruvate. It participates in amino-sugar metabolism; N-acetylneuraminate degradation; D-fructose 6-phosphate from N-acetylneuraminate: step 1/5. Functionally, catalyzes the reversible aldol cleavage of N-acetylneuraminic acid (sialic acid; Neu5Ac) to form pyruvate and N-acetylmannosamine (ManNAc) via a Schiff base intermediate. The chain is N-acetylneuraminate lyase from Escherichia fergusonii (strain ATCC 35469 / DSM 13698 / CCUG 18766 / IAM 14443 / JCM 21226 / LMG 7866 / NBRC 102419 / NCTC 12128 / CDC 0568-73).